The sequence spans 463 residues: Chromosomal replication initiator protein DnaA (463 aa).

The interval 1–84 (MNTNQIILTN…QLFQHYNNAI (84 aa)) is domain I, interacts with DnaA modulators. A domain II region spans residues 84-124 (IKTVEIITKELPASNQATLELPTKTFADIGSSELNSENIFS). The domain III, AAA+ region stretch occupies residues 125–343 (TFDIRFTFDN…GALNKVIAHS (219 aa)). Residues G171, G173, K174, and T175 each coordinate ATP. The segment at 344–463 (NFTAKEITLE…INLMMKILQN (120 aa)) is domain IV, binds dsDNA.

It belongs to the DnaA family. Oligomerizes as a right-handed, spiral filament on DNA at oriC.

It localises to the cytoplasm. In terms of biological role, plays an essential role in the initiation and regulation of chromosomal replication. ATP-DnaA binds to the origin of replication (oriC) to initiate formation of the DNA replication initiation complex once per cell cycle. Binds the DnaA box (a 9 base pair repeat at the origin) and separates the double-stranded (ds)DNA. Forms a right-handed helical filament on oriC DNA; dsDNA binds to the exterior of the filament while single-stranded (ss)DNA is stabiized in the filament's interior. The ATP-DnaA-oriC complex binds and stabilizes one strand of the AT-rich DNA unwinding element (DUE), permitting loading of DNA polymerase. After initiation quickly degrades to an ADP-DnaA complex that is not apt for DNA replication. Binds acidic phospholipids. In Rickettsia bellii (strain RML369-C), this protein is Chromosomal replication initiator protein DnaA.